The chain runs to 497 residues: MASGILLNVKEEVTCPICLELLTEPLSLPCGHSFCQACITANHRKSMLYKEGERSCPVCRISYQPENIQPNRHVANIVEKLREVKLSPEEGLKVDHCARHGEKLLLFCQEDSKVICWLCERSQEHRGHHTFLMEEVAQEYHVKLQTALEMLRQKQQEAEKLEADIREEKASWKIQIDYDKTNVSADFEQLREILDWEESNELQNLEKEEEDILKSLTKSETEMVQQTQYMRELISDLEHRLQGSMMELLQGVDGIIKRIENMTLKKPKTFHKNQRRVFRAPDLKGMLDMFRELTDVRRYWVDVTLAPNNISHAVIAEDKRQVSSRNPQITYQAPGTLFSFPSLTNFNYCTGVLGSQSITSGKHYWEVDVSKKSAWILGVCAGFQPDAMYNIEQNENYQPKYGYWVIGLQEGVKYSVFQDGSSHTPFAPFIVPLSVIICPDRVGVFVDYEACTVSFFNITNHGFLIYKFSQCSFSKPVFPYLNPRKCTVPMTLCSPSS.

Ala2 is subject to N-acetylalanine. The segment at 15–60 (CPICLELLTEPLSLPCGHSFCQACITANHRKSMLYKEGERSCPVCR) adopts an RING-type zinc-finger fold. Ser87 is subject to Phosphoserine. The B box-type zinc finger occupies 92-133 (LKVDHCARHGEKLLLFCQEDSKVICWLCERSQEHRGHHTFLM). Residues Cys97, His100, Cys119, and His125 each coordinate Zn(2+). Residues 137-225 (AQEYHVKLQT…LTKSETEMVQ (89 aa)) adopt a coiled-coil conformation. The required for interaction with GABARAP and for autophagy stretch occupies residues 187–200 (FEQLREILDWEESN). Residues 283–497 (LKGMLDMFRE…VPMTLCSPSS (215 aa)) form the B30.2/SPRY domain.

This sequence belongs to the TRIM/RBCC family. Can form homodimers and homotrimers. In addition to lower-order dimerization, also exhibits a higher-order multimerization and both low- and high-order multimerizations are essential for its restriction activity. Interacts with BTBD1 and BTBD2. Interacts with PSMC4, PSMC5, PSMD7 and HSPA8/HSC70. Interacts (via B30.2/SPRY domain) with HSPA1A/B. Interacts with PSMC2, MAP3K7/TAK1, TAB2 and TAB3. Interacts with SQSTM1. Interacts with TRIM6 and TRIM34. Interacts with ULK1 (phosphorylated form), GABARAP, GABARAPL1, GABARAPL2, MAP1LC3A, MAP1LC3C and BECN1. Degraded in a proteasome-independent fashion in the absence of viral infection but in a proteasome-dependent fashion following exposure to restriction sensitive virus. In terms of processing, autoubiquitinated in a RING finger- and UBE2D2-dependent manner. Monoubiquitinated by TRIM21. Deubiquitinated by Yersinia YopJ. Ubiquitination may not lead to proteasomal degradation.

Its subcellular location is the cytoplasm. It localises to the nucleus. It carries out the reaction S-ubiquitinyl-[E2 ubiquitin-conjugating enzyme]-L-cysteine + [acceptor protein]-L-lysine = [E2 ubiquitin-conjugating enzyme]-L-cysteine + N(6)-ubiquitinyl-[acceptor protein]-L-lysine.. Its pathway is protein modification; protein ubiquitination. Its function is as follows. Capsid-specific restriction factor that prevents infection from non-host-adapted retroviruses. Blocks viral replication early in the life cycle, after viral entry but before reverse transcription. In addition to acting as a capsid-specific restriction factor, also acts as a pattern recognition receptor that activates innate immune signaling in response to the retroviral capsid lattice. Binding to the viral capsid triggers its E3 ubiquitin ligase activity, and in concert with the heterodimeric ubiquitin conjugating enzyme complex UBE2V1-UBE2N (also known as UBC13-UEV1A complex) generates 'Lys-63'-linked polyubiquitin chains, which in turn are catalysts in the autophosphorylation of the MAP3K7/TAK1 complex (includes TAK1, TAB2, and TAB3). Activation of the MAP3K7/TAK1 complex by autophosphorylation results in the induction and expression of NF-kappa-B and MAPK-responsive inflammatory genes, thereby leading to an innate immune response in the infected cell. Plays a role in regulating autophagy through activation of autophagy regulator BECN1 by causing its dissociation from its inhibitors BCL2 and TAB2. The polypeptide is Tripartite motif-containing protein 5 (TRIM5) (Papio anubis (Olive baboon)).